Here is a 99-residue protein sequence, read N- to C-terminus: Large ribosomal subunit protein bL21 (99 aa).

This sequence belongs to the bacterial ribosomal protein bL21 family. In terms of assembly, part of the 50S ribosomal subunit. Contacts protein L20.

In terms of biological role, this protein binds to 23S rRNA in the presence of protein L20. The chain is Large ribosomal subunit protein bL21 from Anaplasma phagocytophilum (strain HZ).